The chain runs to 401 residues: L-rhamnonate dehydratase (401 aa).

Substrate is bound by residues histidine 29 and arginine 55. Mg(2+) is bound by residues aspartate 222, glutamate 248, and glutamate 276. Histidine 325 (proton acceptor) is an active-site residue. Glutamate 345 contributes to the substrate binding site.

Belongs to the mandelate racemase/muconate lactonizing enzyme family. RhamD subfamily. Homooctamer; tetramer of dimers. The cofactor is Mg(2+).

The enzyme catalyses L-rhamnonate = 2-dehydro-3-deoxy-L-rhamnonate + H2O. In terms of biological role, catalyzes the dehydration of L-rhamnonate to 2-keto-3-deoxy-L-rhamnonate (KDR). The polypeptide is L-rhamnonate dehydratase (Salmonella schwarzengrund (strain CVM19633)).